Consider the following 305-residue polypeptide: UDP-3-O-acyl-N-acetylglucosamine deacetylase (305 aa).

Residues His79, His238, and Asp242 each contribute to the Zn(2+) site. Residue His265 is the Proton donor of the active site.

This sequence belongs to the LpxC family. It depends on Zn(2+) as a cofactor.

It catalyses the reaction a UDP-3-O-[(3R)-3-hydroxyacyl]-N-acetyl-alpha-D-glucosamine + H2O = a UDP-3-O-[(3R)-3-hydroxyacyl]-alpha-D-glucosamine + acetate. It participates in glycolipid biosynthesis; lipid IV(A) biosynthesis; lipid IV(A) from (3R)-3-hydroxytetradecanoyl-[acyl-carrier-protein] and UDP-N-acetyl-alpha-D-glucosamine: step 2/6. Its function is as follows. Catalyzes the hydrolysis of UDP-3-O-myristoyl-N-acetylglucosamine to form UDP-3-O-myristoylglucosamine and acetate, the committed step in lipid A biosynthesis. In Citrobacter koseri (strain ATCC BAA-895 / CDC 4225-83 / SGSC4696), this protein is UDP-3-O-acyl-N-acetylglucosamine deacetylase.